Here is a 578-residue protein sequence, read N- to C-terminus: PTS system fructose-specific EIIB'BC component (578 aa).

PTS EIIB type-2 domains lie at 1-99 and 119-214; these read MSKI…EALA and VVAI…AALA. Residue cysteine 125 is the Phosphocysteine intermediate; for EIIB activity of the active site. Cysteine 125 carries the phosphocysteine; by EIIA modification. In terms of domain architecture, PTS EIIC type-2 spans 241-576; that stretch reads PYMHLLTGVS…KKPIPAEERA (336 aa). Helical transmembrane passes span 251–271, 284–304, 319–339, 364–384, 405–425, 428–450, 477–497, 518–538, and 545–565; these read YMLPLVVAGGLLIALSFVFGI, LMAIGGGAAFKLMVPVLAGFI, IGGMLAVNLNAGFLGGIVAGF, VLILPLLSTAITGLIMVYVVG, NAVVLGLILGGMMAVDMGGPI, AAYTFAVGLLTSSTYAPMAAVMA, AGGAAAVLGLSFITEGAIPFA, LSMALGCLLVAPHGGIFVLAI, and LGLYALSIVVGTLVTTGLLIA.

The protein localises to the cell inner membrane. The enzyme catalyses D-fructose(out) + N(pros)-phospho-L-histidyl-[protein] = D-fructose 1-phosphate(in) + L-histidyl-[protein]. Functionally, the phosphoenolpyruvate-dependent sugar phosphotransferase system (sugar PTS), a major carbohydrate active transport system, catalyzes the phosphorylation of incoming sugar substrates concomitantly with their translocation across the cell membrane. The enzyme II FruAB PTS system is involved in fructose transport. In Rhodobacter capsulatus (Rhodopseudomonas capsulata), this protein is PTS system fructose-specific EIIB'BC component.